Here is a 105-residue protein sequence, read N- to C-terminus: Large ribosomal subunit protein uL24 (105 aa).

This sequence belongs to the universal ribosomal protein uL24 family. Part of the 50S ribosomal subunit.

One of two assembly initiator proteins, it binds directly to the 5'-end of the 23S rRNA, where it nucleates assembly of the 50S subunit. In terms of biological role, one of the proteins that surrounds the polypeptide exit tunnel on the outside of the subunit. This is Large ribosomal subunit protein uL24 from Staphylococcus epidermidis (strain ATCC 35984 / DSM 28319 / BCRC 17069 / CCUG 31568 / BM 3577 / RP62A).